The following is a 208-amino-acid chain: Peptidyl-tRNA hydrolase (208 aa).

Y19 serves as a coordination point for tRNA. H24 functions as the Proton acceptor in the catalytic mechanism. Residues F71, N73, and N119 each contribute to the tRNA site.

The protein belongs to the PTH family. As to quaternary structure, monomer.

It is found in the cytoplasm. It catalyses the reaction an N-acyl-L-alpha-aminoacyl-tRNA + H2O = an N-acyl-L-amino acid + a tRNA + H(+). Its function is as follows. Hydrolyzes ribosome-free peptidyl-tRNAs (with 1 or more amino acids incorporated), which drop off the ribosome during protein synthesis, or as a result of ribosome stalling. Functionally, catalyzes the release of premature peptidyl moieties from peptidyl-tRNA molecules trapped in stalled 50S ribosomal subunits, and thus maintains levels of free tRNAs and 50S ribosomes. In Synechococcus elongatus (strain ATCC 33912 / PCC 7942 / FACHB-805) (Anacystis nidulans R2), this protein is Peptidyl-tRNA hydrolase.